Reading from the N-terminus, the 409-residue chain is DNA replication and repair protein RecF (409 aa).

30–37 (GSNGHGKT) is a binding site for ATP.

This sequence belongs to the RecF family.

The protein localises to the cytoplasm. The RecF protein is involved in DNA metabolism; it is required for DNA replication and normal SOS inducibility. RecF binds preferentially to single-stranded, linear DNA. It also seems to bind ATP. The chain is DNA replication and repair protein RecF from Rhodococcus erythropolis (strain PR4 / NBRC 100887).